The primary structure comprises 475 residues: Coronin-2B (475 aa).

5 WD repeats span residues 80-120 (GHQG…LKRN), 130-172 (GHSR…KMID), 174-212 (HTDV…VLQE), 215-258 (CKNH…MPVT), and 260-303 (EEID…PYLT). Residues 431-470 (NELLRMFFKQQEEIRRLKEQLSQRDLLVRQLELELKNLRN) adopt a coiled-coil conformation.

It belongs to the WD repeat coronin family.

It localises to the cytoplasm. The protein resides in the cytoskeleton. Its function is as follows. May play a role in the reorganization of neuronal actin structure. The polypeptide is Coronin-2B (coro2b) (Xenopus laevis (African clawed frog)).